Here is a 438-residue protein sequence, read N- to C-terminus: Probable inactive protein kinase 38 (438 aa).

Residues 77–340 (PRFRLALGKG…FTELQPQYFL (264 aa)) enclose the Protein kinase domain.

This sequence belongs to the protein kinase superfamily. Tyr protein kinase family.

The polypeptide is Probable inactive protein kinase 38 (36) (Equus caballus (Horse)).